The following is a 137-amino-acid chain: uncharacterized protein (137 aa).

Residues 4 to 118 enclose the CENP-V/GFA domain; the sequence is YEGNCLCKAI…CIDDKPDCYD (115 aa). Residues Cys-8, Cys-10, Cys-27, Cys-29, Cys-32, Cys-71, and Cys-74 each coordinate Zn(2+).

It belongs to the Gfa family. It depends on Zn(2+) as a cofactor.

It localises to the cytoplasm. Its subcellular location is the nucleus. This is an uncharacterized protein from Schizosaccharomyces pombe (strain 972 / ATCC 24843) (Fission yeast).